The primary structure comprises 122 residues: ATP-dependent Clp protease adapter protein ClpS (122 aa).

A disordered region spans residues M1–S33. Residues D14–E24 show a composition bias toward basic and acidic residues.

This sequence belongs to the ClpS family. Binds to the N-terminal domain of the chaperone ClpA.

Functionally, involved in the modulation of the specificity of the ClpAP-mediated ATP-dependent protein degradation. The chain is ATP-dependent Clp protease adapter protein ClpS from Pseudomonas aeruginosa (strain ATCC 15692 / DSM 22644 / CIP 104116 / JCM 14847 / LMG 12228 / 1C / PRS 101 / PAO1).